Consider the following 211-residue polypeptide: Cyclin-dependent kinase inhibitor 3 (211 aa).

The interval 1–20 (MKPPISIQASEFDSSDEEPV) is disordered. Residues 1 to 34 (MKPPISIQASEFDSSDEEPVDEEQTPIQISWLPL) form an interaction with CDK2 region. A Tyrosine-protein phosphatase domain is found at 32–200 (LPLSRVNCSQ…FRDKLAAYLS (169 aa)). The Phosphocysteine intermediate role is filled by Cys140.

This sequence belongs to the protein-tyrosine phosphatase family. Interacts with cyclin-dependent kinases such as CDK1, CDK2 and CDK3. Does not interact with CDK4. Interacts (via C-terminus) with phosphorylated CDK2 (via C-terminal helix). Interacts with MS4A3 (via C-terminus); the interaction enhances CDKN3 enzymatic activity.

The protein localises to the cytoplasm. Its subcellular location is the perinuclear region. It carries out the reaction O-phospho-L-tyrosyl-[protein] + H2O = L-tyrosyl-[protein] + phosphate. The enzyme catalyses O-phospho-L-seryl-[protein] + H2O = L-seryl-[protein] + phosphate. The catalysed reaction is O-phospho-L-threonyl-[protein] + H2O = L-threonyl-[protein] + phosphate. Its function is as follows. May play a role in cell cycle regulation. Dual specificity phosphatase active toward substrates containing either phosphotyrosine or phosphoserine residues. Dephosphorylates CDK2 at 'Thr-160' in a cyclin-dependent manner. The chain is Cyclin-dependent kinase inhibitor 3 from Mus musculus (Mouse).